The sequence spans 767 residues: Protein transport protein Sec23A (767 aa).

Positions 61, 66, 85, and 88 each coordinate Zn(2+). Residues 634 to 720 form a Gelsolin-like repeat; it reads PEPVLLDSSS…EHGGSQARFL (87 aa).

Belongs to the SEC23/SEC24 family. SEC23 subfamily. In terms of assembly, COPII is composed of at least five proteins: the Sec23/24 complex, the Sec13/31 complex and Sar1.

Its subcellular location is the cytoplasmic vesicle. The protein resides in the COPII-coated vesicle membrane. The protein localises to the endoplasmic reticulum membrane. It localises to the cytoplasm. It is found in the cytosol. Functionally, component of the coat protein complex II (COPII) which promotes the formation of transport vesicles from the endoplasmic reticulum (ER). The coat has two main functions, the physical deformation of the endoplasmic reticulum membrane into vesicles and the selection of cargo molecules for their transport to the Golgi complex. The sequence is that of Protein transport protein Sec23A from Gallus gallus (Chicken).